The following is a 340-amino-acid chain: Phenylalanine--tRNA ligase alpha subunit (340 aa).

Glu-258 contributes to the Mg(2+) binding site.

It belongs to the class-II aminoacyl-tRNA synthetase family. Phe-tRNA synthetase alpha subunit type 1 subfamily. As to quaternary structure, tetramer of two alpha and two beta subunits. The cofactor is Mg(2+).

It is found in the cytoplasm. The enzyme catalyses tRNA(Phe) + L-phenylalanine + ATP = L-phenylalanyl-tRNA(Phe) + AMP + diphosphate + H(+). This Corynebacterium efficiens (strain DSM 44549 / YS-314 / AJ 12310 / JCM 11189 / NBRC 100395) protein is Phenylalanine--tRNA ligase alpha subunit.